The following is a 708-amino-acid chain: Protein MICRORCHIDIA 5 (708 aa).

Over residues 1–11 (MAESGSTNPKS) the composition is skewed to polar residues. The interval 1 to 47 (MAESGSTNPKSPSVVPDSTLGGLKRDLRNYHDGDDSNNLSIKKSKTT) is disordered. Basic and acidic residues predominate over residues 23–34 (LKRDLRNYHDGD). A coiled-coil region spans residues 590–665 (SVNLEAELQK…LENRQEGVST (76 aa)). The Nuclear localization signal motif lies at 672–679 (ARRDVTED).

It belongs to the MORC ATPase protein family. Homodimer and heterodimer. Component of an RNA-directed DNA methylation (RdDM) complex. Requires Mg(2+) as cofactor. Mn(2+) is required as a cofactor.

The protein localises to the nucleus. Its function is as follows. Exhibits ATPase activity. Binds DNA/RNA in a non-specific manner and exhibits endonuclease activity. Probably involved in DNA repair. Involved in RNA-directed DNA methylation (RdDM) as a component of the RdDM machinery and required for gene silencing. May also be involved in the regulation of chromatin architecture to maintain gene silencing. This chain is Protein MICRORCHIDIA 5, found in Arabidopsis thaliana (Mouse-ear cress).